Consider the following 167-residue polypeptide: Ureidoglycolate lyase (167 aa).

The protein belongs to the ureidoglycolate lyase family. Homodimer. Ni(2+) serves as cofactor.

The catalysed reaction is (S)-ureidoglycolate = urea + glyoxylate. It functions in the pathway nitrogen metabolism; (S)-allantoin degradation. In terms of biological role, catalyzes the catabolism of the allantoin degradation intermediate (S)-ureidoglycolate, generating urea and glyoxylate. Involved in the utilization of allantoin as nitrogen source. The chain is Ureidoglycolate lyase from Pseudomonas putida (strain ATCC 700007 / DSM 6899 / JCM 31910 / BCRC 17059 / LMG 24140 / F1).